Reading from the N-terminus, the 201-residue chain is NADH-quinone oxidoreductase subunit C (201 aa).

This sequence belongs to the complex I 30 kDa subunit family. In terms of assembly, NDH-1 is composed of 14 different subunits. Subunits NuoB, C, D, E, F, and G constitute the peripheral sector of the complex.

It is found in the cell inner membrane. It catalyses the reaction a quinone + NADH + 5 H(+)(in) = a quinol + NAD(+) + 4 H(+)(out). Functionally, NDH-1 shuttles electrons from NADH, via FMN and iron-sulfur (Fe-S) centers, to quinones in the respiratory chain. The immediate electron acceptor for the enzyme in this species is believed to be ubiquinone. Couples the redox reaction to proton translocation (for every two electrons transferred, four hydrogen ions are translocated across the cytoplasmic membrane), and thus conserves the redox energy in a proton gradient. The chain is NADH-quinone oxidoreductase subunit C from Mesorhizobium japonicum (strain LMG 29417 / CECT 9101 / MAFF 303099) (Mesorhizobium loti (strain MAFF 303099)).